A 448-amino-acid chain; its full sequence is Probable D-serine dehydratase (448 aa).

At K119 the chain carries N6-(pyridoxal phosphate)lysine.

This sequence belongs to the serine/threonine dehydratase family. DsdA subfamily. Requires pyridoxal 5'-phosphate as cofactor.

The enzyme catalyses D-serine = pyruvate + NH4(+). The polypeptide is Probable D-serine dehydratase (Pseudomonas aeruginosa (strain ATCC 15692 / DSM 22644 / CIP 104116 / JCM 14847 / LMG 12228 / 1C / PRS 101 / PAO1)).